The following is a 172-amino-acid chain: Large ribosomal subunit protein uL10 (172 aa).

This sequence belongs to the universal ribosomal protein uL10 family. In terms of assembly, part of the ribosomal stalk of the 50S ribosomal subunit. The N-terminus interacts with L11 and the large rRNA to form the base of the stalk. The C-terminus forms an elongated spine to which L12 dimers bind in a sequential fashion forming a multimeric L10(L12)X complex.

In terms of biological role, forms part of the ribosomal stalk, playing a central role in the interaction of the ribosome with GTP-bound translation factors. This is Large ribosomal subunit protein uL10 from Nitrobacter winogradskyi (strain ATCC 25391 / DSM 10237 / CIP 104748 / NCIMB 11846 / Nb-255).